Reading from the N-terminus, the 390-residue chain is Dual-specificity RNA methyltransferase RlmN (390 aa).

Catalysis depends on Glu110, which acts as the Proton acceptor. The Radical SAM core domain occupies 116-355 (EADRATLCVS…VIIRKTRGDD (240 aa)). Cysteines 123 and 360 form a disulfide. 3 residues coordinate [4Fe-4S] cluster: Cys130, Cys134, and Cys137. S-adenosyl-L-methionine is bound by residues 184–185 (GE), Ser216, 238–240 (SLH), and Asn317. The active-site S-methylcysteine intermediate is the Cys360.

This sequence belongs to the radical SAM superfamily. RlmN family. The cofactor is [4Fe-4S] cluster.

The protein localises to the cytoplasm. It catalyses the reaction adenosine(2503) in 23S rRNA + 2 reduced [2Fe-2S]-[ferredoxin] + 2 S-adenosyl-L-methionine = 2-methyladenosine(2503) in 23S rRNA + 5'-deoxyadenosine + L-methionine + 2 oxidized [2Fe-2S]-[ferredoxin] + S-adenosyl-L-homocysteine. The catalysed reaction is adenosine(37) in tRNA + 2 reduced [2Fe-2S]-[ferredoxin] + 2 S-adenosyl-L-methionine = 2-methyladenosine(37) in tRNA + 5'-deoxyadenosine + L-methionine + 2 oxidized [2Fe-2S]-[ferredoxin] + S-adenosyl-L-homocysteine. Functionally, specifically methylates position 2 of adenine 2503 in 23S rRNA and position 2 of adenine 37 in tRNAs. m2A2503 modification seems to play a crucial role in the proofreading step occurring at the peptidyl transferase center and thus would serve to optimize ribosomal fidelity. The polypeptide is Dual-specificity RNA methyltransferase RlmN (Haemophilus influenzae (strain PittEE)).